A 159-amino-acid polypeptide reads, in one-letter code: IQ domain-containing protein J (159 aa).

In terms of domain architecture, IQ spans 47–67 (ESKVKIIQRAWREYLQRQEPL). The interval 63–88 (RQEPLGKRSPSPPSVSSEKLSSSVSM) is disordered. Low complexity predominate over residues 76–87 (SVSSEKLSSSVS).

The chain is IQ domain-containing protein J from Homo sapiens (Human).